The primary structure comprises 1170 residues: Disease resistance protein LAZ5 (1170 aa).

In terms of domain architecture, TIR spans 10–172; that stretch reads ESWQVFINFR…KIIDSIKKVL (163 aa). E84 is an active-site residue. The segment at 193–219 is disordered; sequence EAKNVDTFSPNSSDFPSTSIDDDLSIN. Residues 198–219 show a composition bias toward polar residues; it reads DTFSPNSSDFPSTSIDDDLSIN. The region spanning 261–513 is the NB-ARC domain; that stretch reads RLKEMEEKLD…DVACFFKSEN (253 aa). LRR repeat units lie at residues 595–616, 622–645, 646–670, 677–700, 723–747, 761–785, 790–813, 815–837, 838–861, 862–885, 888–904, and 905–930; these read MENV…TFDG, MCNL…IFKF, DTVR…PWEK, PENL…VKDT, AKNL…MENM, LTCL…KLEE, SENL…AGDL, RLVV…LGKQ, KALQ…VKDM, KHLR…SLKC, LSRN…LKDF, and SNLK…CLEY.

It carries out the reaction NAD(+) + H2O = ADP-D-ribose + nicotinamide + H(+). Functionally, TIR-NB-LRR receptor-like protein that may play a role in plant innate immunity. May trigger hypersensitive programmed cell death in response to pathogen attack. Involved in tolerance to tobacco ringspot virus (TRSV). The polypeptide is Disease resistance protein LAZ5 (Arabidopsis thaliana (Mouse-ear cress)).